A 167-amino-acid chain; its full sequence is Phosphopantetheine adenylyltransferase (167 aa).

A substrate-binding site is contributed by S10. ATP-binding positions include 10-11 (SF) and H18. The substrate site is built by K42, A79, and R93. ATP contacts are provided by residues 94-96 (GLR), E104, and 129-135 (VRHITAT).

This sequence belongs to the bacterial CoaD family. Homohexamer. It depends on Mg(2+) as a cofactor.

Its subcellular location is the cytoplasm. It carries out the reaction (R)-4'-phosphopantetheine + ATP + H(+) = 3'-dephospho-CoA + diphosphate. Its pathway is cofactor biosynthesis; coenzyme A biosynthesis; CoA from (R)-pantothenate: step 4/5. Functionally, reversibly transfers an adenylyl group from ATP to 4'-phosphopantetheine, yielding dephospho-CoA (dPCoA) and pyrophosphate. This is Phosphopantetheine adenylyltransferase from Beijerinckia indica subsp. indica (strain ATCC 9039 / DSM 1715 / NCIMB 8712).